The primary structure comprises 471 residues: 3-isopropylmalate dehydratase large subunit (471 aa).

[4Fe-4S] cluster-binding residues include C347, C407, and C410.

It belongs to the aconitase/IPM isomerase family. LeuC type 1 subfamily. Heterodimer of LeuC and LeuD. Requires [4Fe-4S] cluster as cofactor.

It carries out the reaction (2R,3S)-3-isopropylmalate = (2S)-2-isopropylmalate. It functions in the pathway amino-acid biosynthesis; L-leucine biosynthesis; L-leucine from 3-methyl-2-oxobutanoate: step 2/4. Catalyzes the isomerization between 2-isopropylmalate and 3-isopropylmalate, via the formation of 2-isopropylmaleate. The chain is 3-isopropylmalate dehydratase large subunit from Buchnera aphidicola subsp. Acyrthosiphon pisum (strain APS) (Acyrthosiphon pisum symbiotic bacterium).